A 414-amino-acid polypeptide reads, in one-letter code: Protein ABHD18 (414 aa).

A signal peptide spans 1-24 (MGVSKLDILYRRLLLTKLFIRGWG). N-linked (GlcNAc...) asparagine glycosylation is found at Asn282 and Asn307.

Belongs to the AB hydrolase superfamily.

The protein resides in the secreted. The sequence is that of Protein ABHD18 from Homo sapiens (Human).